The following is a 225-amino-acid chain: Lipoprotein CseA (225 aa).

The first 36 residues, 1–36 (MRGLTDGRTPRGTRRTTQAASTAVAVFVALGVSLAG), serve as a signal peptide directing secretion. The N-palmitoyl cysteine moiety is linked to residue cysteine 37. A lipid anchor (S-diacylglycerol cysteine) is attached at cysteine 37. Disordered regions lie at residues 40-77 (GGTG…APDR) and 205-225 (THND…EPDS). Over residues 60-73 (SASPAPAAKASPSK) the composition is skewed to low complexity.

The protein localises to the cell membrane. In terms of biological role, may be involved in the stabilization of the cell envelope or may interact with the sensor protein CseC to modulate its activity, in response to cell envelope stress. This is Lipoprotein CseA (cseA) from Streptomyces coelicolor (strain ATCC BAA-471 / A3(2) / M145).